The following is a 194-amino-acid chain: 21 kDa hemolysin (194 aa).

The N-terminal stretch at 1 to 19 (MRTRSRSTVRPLWPPPSPA) is a signal peptide. 2 consecutive BON domains span residues 49–118 (DDEV…RTGE) and 127–194 (IDSW…NYVQ).

It localises to the periplasm. In Actinobacillus pleuropneumoniae (Haemophilus pleuropneumoniae), this protein is 21 kDa hemolysin (hly).